A 253-amino-acid chain; its full sequence is LexA repressor (253 aa).

Positions 26–46 form a DNA-binding region, H-T-H motif; sequence FDEMKDALNLRSKSGIHRLIS. Residues 73–97 form a disordered region; it reads MPAATGKPPLAESGPPPVTAPATDE. Residues serine 174 and lysine 212 each act as for autocatalytic cleavage activity in the active site.

This sequence belongs to the peptidase S24 family. In terms of assembly, homodimer.

The enzyme catalyses Hydrolysis of Ala-|-Gly bond in repressor LexA.. Its function is as follows. Represses a number of genes involved in the response to DNA damage (SOS response), including recA and lexA. In the presence of single-stranded DNA, RecA interacts with LexA causing an autocatalytic cleavage which disrupts the DNA-binding part of LexA, leading to derepression of the SOS regulon and eventually DNA repair. The chain is LexA repressor from Gluconacetobacter diazotrophicus (strain ATCC 49037 / DSM 5601 / CCUG 37298 / CIP 103539 / LMG 7603 / PAl5).